Reading from the N-terminus, the 440-residue chain is Oligodendrocyte-myelin glycoprotein (440 aa).

Residues 1 to 24 (MEYQILKMSSCLFILLFLTPGILC) form the signal peptide. An LRRNT domain is found at 25-55 (ICPLQCTCTERHRHVDCSGRNLTTLPPGLQE). N-linked (GlcNAc...) asparagine glycosylation is found at Asn45 and Asn61. LRR repeat units follow at residues 56 to 78 (NIIHLNLSYNHFTDLHNQLTPYT), 79 to 100 (NLRTLDISNNRLESLPAQLPRS), 101 to 121 (LWNMSAANNNIKLLDKSDTAY), 124 to 145 (NLKYLDVSKNMLEKVVLIKNTL), 147 to 168 (SLEVLNLSSNKLWTVPTNMPSK), 169 to 189 (LHIVDLSNNSLTQILPGTLIN), 192 to 213 (NLTHLYLHNNKFTFIPEQSFDQ), and 216 to 239 (QLQEITLHNNRWSCDHKQNITYLL). Asn103 carries N-linked (GlcNAc...) asparagine glycosylation. N-linked (GlcNAc...) asparagine glycans are attached at residues Asn152, Asn176, Asn189, Asn192, and Asn234. 5 Ser/Thr-rich repeats span residues 229 to 270 (CDHK…YPTP), 271 to 292 (PGFTSSLFTMSEMQTVDTINSL), 293 to 335 (SMVT…VAYP), 336 to 377 (EDTP…PPSP), and 378 to 416 (VTLSIARGMPNNFSEMPRQSTTLNLRREETTANGNTRPP). N-linked (GlcNAc...) asparagine glycans are attached at residues Asn364 and Asn389. A lipid anchor (GPI-anchor amidated serine) is attached at Ser417. Residues 418–440 (AASAWKVNASLLLMLNAVVMLAG) constitute a propeptide, removed in mature form. N-linked (GlcNAc...) asparagine glycosylation is present at Asn425.

As to quaternary structure, binds to RTN4R. O-glycosylated in its Ser/Thr-rich repeat domain. Oligodendrocytes and myelin of the central nervous system.

Its subcellular location is the cell membrane. In terms of biological role, cell adhesion molecule contributing to the interactive process required for myelination in the central nervous system. This chain is Oligodendrocyte-myelin glycoprotein (Omg), found in Mus musculus (Mouse).